We begin with the raw amino-acid sequence, 75 residues long: MFTLKKSLLLLFFLGTISLSLCEEERDADEDEGEMTEEEVKRSVLGTVKDLLIGAGKSAAQSVLTALSCKLSNSC.

Residues 1–22 (MFTLKKSLLLLFFLGTISLSLC) form the signal peptide. A propeptide spanning residues 23-40 (EEERDADEDEGEMTEEEV) is cleaved from the precursor. Cys-69 and Cys-75 form a disulfide bridge.

As to expression, expressed by the skin glands.

It is found in the secreted. Its function is as follows. Antimicrobial peptide. The chain is Lividin-3 from Odorrana livida (Green mountain frog).